We begin with the raw amino-acid sequence, 60 residues long: Large ribosomal subunit protein uL30 (60 aa).

This sequence belongs to the universal ribosomal protein uL30 family. In terms of assembly, part of the 50S ribosomal subunit.

The protein is Large ribosomal subunit protein uL30 of Leuconostoc citreum (strain KM20).